Here is a 234-residue protein sequence, read N- to C-terminus: Orotidine 5'-phosphate decarboxylase (234 aa).

Residues aspartate 14, lysine 36, 63–72 (DMKLLDIDNT), threonine 118, arginine 179, glutamine 188, glycine 208, and arginine 209 each bind substrate. Lysine 65 (proton donor) is an active-site residue.

The protein belongs to the OMP decarboxylase family. Type 1 subfamily. In terms of assembly, homodimer.

The catalysed reaction is orotidine 5'-phosphate + H(+) = UMP + CO2. Its pathway is pyrimidine metabolism; UMP biosynthesis via de novo pathway; UMP from orotate: step 2/2. Its function is as follows. Catalyzes the decarboxylation of orotidine 5'-monophosphate (OMP) to uridine 5'-monophosphate (UMP). The chain is Orotidine 5'-phosphate decarboxylase from Rhizobium meliloti (strain 1021) (Ensifer meliloti).